Here is a 201-residue protein sequence, read N- to C-terminus: Glutathione peroxidase 1 (201 aa).

Serine 7 and serine 32 each carry phosphoserine. Selenocysteine 47 is a catalytic residue. A non-standard amino acid (selenocysteine) is located at residue selenocysteine 47. N6-acetyllysine; alternate is present on residues lysine 62, lysine 86, and lysine 112. 3 positions are modified to N6-succinyllysine; alternate: lysine 62, lysine 86, and lysine 112. Lysine 119 carries the post-translational modification N6-acetyllysine. An N6-acetyllysine; alternate modification is found at lysine 146. Lysine 146 is subject to N6-succinyllysine; alternate. Phosphoserine is present on serine 195.

Belongs to the glutathione peroxidase family. As to quaternary structure, homotetramer. Interacts with MIEN1. During periods of oxidative stress, Sec-47 may react with a superoxide radical, irreversibly lose hydroselenide and be converted to dehydroalanine. Expressed in liver, kidney, lung, brain and heart.

It is found in the cytoplasm. It localises to the mitochondrion. It catalyses the reaction 2 glutathione + H2O2 = glutathione disulfide + 2 H2O. The catalysed reaction is a hydroperoxy polyunsaturated fatty acid + 2 glutathione = a hydroxy polyunsaturated fatty acid + glutathione disulfide + H2O. The enzyme catalyses tert-butyl hydroperoxide + 2 glutathione = tert-butanol + glutathione disulfide + H2O. It carries out the reaction cumene hydroperoxide + 2 glutathione = 2-phenylpropan-2-ol + glutathione disulfide + H2O. It catalyses the reaction (13S)-hydroperoxy-(9Z,11E)-octadecadienoate + 2 glutathione = (13S)-hydroxy-(9Z,11E)-octadecadienoate + glutathione disulfide + H2O. The catalysed reaction is (9S)-hydroperoxy-(10E,12Z)-octadecadienoate + 2 glutathione = (9S)-hydroxy-(10E,12Z)-octadecadienoate + glutathione disulfide + H2O. The enzyme catalyses (5S)-hydroperoxy-(6E,8Z,11Z,14Z)-eicosatetraenoate + 2 glutathione = (5S)-hydroxy-(6E,8Z,11Z,14Z)-eicosatetraenoate + glutathione disulfide + H2O. It carries out the reaction (12S)-hydroperoxy-(5Z,8Z,10E,14Z)-eicosatetraenoate + 2 glutathione = (12S)-hydroxy-(5Z,8Z,10E,14Z)-eicosatetraenoate + glutathione disulfide + H2O. It catalyses the reaction (12R)-hydroperoxy-(5Z,8Z,10E,14Z)-eicosatetraenoate + 2 glutathione = (12R)-hydroxy-(5Z,8Z,10E,14Z)-eicosatetraenoate + glutathione disulfide + H2O. The catalysed reaction is (15S)-hydroperoxy-(5Z,8Z,11Z,13E)-eicosatetraenoate + 2 glutathione = (15S)-hydroxy-(5Z,8Z,11Z,13E)-eicosatetraenoate + glutathione disulfide + H2O. The enzyme catalyses (5S)-hydroperoxy-(6E,8Z,11Z,14Z,17Z)-eicosapentaenoate + 2 glutathione = (5S)-hydroxy-(6E,8Z,11Z,14Z,17Z)-eicosapentaenoate + glutathione disulfide + H2O. It carries out the reaction (12S)-hydroperoxy-(5Z,8Z,10E,14Z,17Z)-eicosapentaenoate + 2 glutathione = (12S)-hydroxy-(5Z,8Z,10E,14Z,17Z)-eicosapentaenoate + glutathione disulfide + H2O. It catalyses the reaction (15S)-hydroperoxy-(5Z,8Z,11Z,13E,17Z)-eicosapentaenoate + 2 glutathione = (15S)-hydroxy-(5Z,8Z,11Z,13E,17Z)-eicosapentaenoate + glutathione disulfide + H2O. The catalysed reaction is (15S)-hydroperoxy-(11Z,13E)-eicosadienoate + 2 glutathione = (15S)-hydroxy-(11Z,13E)-eicosadienoate + glutathione disulfide + H2O. The enzyme catalyses (17S)-hydroperoxy-(4Z,7Z,10Z,13Z,15E,19Z)-docosahexaenoate + 2 glutathione = (17S)-hydroxy-(4Z,7Z,10Z,13Z,15E,19Z)-docosahexaenoate + glutathione disulfide + H2O. Its function is as follows. Catalyzes the reduction of hydroperoxides in a glutathione-dependent manner thus regulating cellular redox homeostasis. Can reduce small soluble hydroperoxides such as H2O2, cumene hydroperoxide and tert-butyl hydroperoxide, as well as several fatty acid-derived hydroperoxides. In platelets catalyzes the reduction of 12-hydroperoxyeicosatetraenoic acid, the primary product of the arachidonate 12-lipoxygenase pathway. This chain is Glutathione peroxidase 1, found in Mus musculus (Mouse).